A 595-amino-acid polypeptide reads, in one-letter code: UvrABC system protein C (595 aa).

In terms of domain architecture, GIY-YIG spans F17–I94. The region spanning K199–L234 is the UVR domain.

This sequence belongs to the UvrC family. In terms of assembly, interacts with UvrB in an incision complex.

Its subcellular location is the cytoplasm. In terms of biological role, the UvrABC repair system catalyzes the recognition and processing of DNA lesions. UvrC both incises the 5' and 3' sides of the lesion. The N-terminal half is responsible for the 3' incision and the C-terminal half is responsible for the 5' incision. In Staphylococcus carnosus (strain TM300), this protein is UvrABC system protein C.